A 118-amino-acid chain; its full sequence is Small ribosomal subunit protein uS13 (118 aa).

The segment at 94–118 (SLPLRGQRTKTNARTRKGPRKPIKK) is disordered.

Belongs to the universal ribosomal protein uS13 family. As to quaternary structure, part of the 30S ribosomal subunit. Forms a loose heterodimer with protein S19. Forms two bridges to the 50S subunit in the 70S ribosome.

Its function is as follows. Located at the top of the head of the 30S subunit, it contacts several helices of the 16S rRNA. In the 70S ribosome it contacts the 23S rRNA (bridge B1a) and protein L5 of the 50S subunit (bridge B1b), connecting the 2 subunits; these bridges are implicated in subunit movement. Contacts the tRNAs in the A and P-sites. The chain is Small ribosomal subunit protein uS13 from Aliivibrio fischeri (strain ATCC 700601 / ES114) (Vibrio fischeri).